The following is a 388-amino-acid chain: Succinate--CoA ligase [ADP-forming] subunit beta (388 aa).

The 236-residue stretch at 9-244 folds into the ATP-grasp domain; the sequence is KQLFAEFGLP…PSQEDEREAH (236 aa). Residues Lys46, 53-55, Glu99, Ser102, and Glu107 contribute to the ATP site; that span reads GRG. Mg(2+) contacts are provided by Asn199 and Asp213. Substrate is bound by residues Asn264 and 321–323; that span reads GIV.

Belongs to the succinate/malate CoA ligase beta subunit family. In terms of assembly, heterotetramer of two alpha and two beta subunits. It depends on Mg(2+) as a cofactor.

The catalysed reaction is succinate + ATP + CoA = succinyl-CoA + ADP + phosphate. It catalyses the reaction GTP + succinate + CoA = succinyl-CoA + GDP + phosphate. It participates in carbohydrate metabolism; tricarboxylic acid cycle; succinate from succinyl-CoA (ligase route): step 1/1. Functionally, succinyl-CoA synthetase functions in the citric acid cycle (TCA), coupling the hydrolysis of succinyl-CoA to the synthesis of either ATP or GTP and thus represents the only step of substrate-level phosphorylation in the TCA. The beta subunit provides nucleotide specificity of the enzyme and binds the substrate succinate, while the binding sites for coenzyme A and phosphate are found in the alpha subunit. The chain is Succinate--CoA ligase [ADP-forming] subunit beta from Vibrio campbellii (strain ATCC BAA-1116).